Here is a 142-residue protein sequence, read N- to C-terminus: Alpha-lactalbumin (142 aa).

Positions 1 to 19 are cleaved as a signal peptide; the sequence is MMSFVSLLLVGILFHATQA. The C-type lysozyme domain occupies 20–142; it reads EQLTKCEVFR…KLDQWLCEKL (123 aa). Intrachain disulfides connect Cys25–Cys139, Cys47–Cys130, Cys80–Cys96, and Cys92–Cys110. An N-linked (GlcNAc...) asparagine glycan is attached at Asn64. Ca(2+) contacts are provided by Lys98, Asp101, Asp103, Asp106, and Asp107.

It belongs to the glycosyl hydrolase 22 family. Lactose synthase (LS) is a heterodimer of a catalytic component, beta1,4-galactosyltransferase (beta4Gal-T1) and a regulatory component, alpha-lactalbumin (LA). In terms of tissue distribution, mammary gland specific. Secreted in milk.

It is found in the secreted. Regulatory subunit of lactose synthase, changes the substrate specificity of galactosyltransferase in the mammary gland making glucose a good acceptor substrate for this enzyme. This enables LS to synthesize lactose, the major carbohydrate component of milk. In other tissues, galactosyltransferase transfers galactose onto the N-acetylglucosamine of the oligosaccharide chains in glycoproteins. In Bos taurus (Bovine), this protein is Alpha-lactalbumin (LALBA).